We begin with the raw amino-acid sequence, 390 residues long: Dual-specificity RNA methyltransferase RlmN (390 aa).

Glutamate 110 acts as the Proton acceptor in catalysis. Residues 116 to 355 (EADRATLCVS…VIIRKTRGDD (240 aa)) form the Radical SAM core domain. Cysteines 123 and 360 form a disulfide. The [4Fe-4S] cluster site is built by cysteine 130, cysteine 134, and cysteine 137. S-adenosyl-L-methionine is bound by residues 184 to 185 (GE), serine 216, 238 to 240 (SLH), and asparagine 317. Cysteine 360 (S-methylcysteine intermediate) is an active-site residue.

The protein belongs to the radical SAM superfamily. RlmN family. [4Fe-4S] cluster serves as cofactor.

Its subcellular location is the cytoplasm. It carries out the reaction adenosine(2503) in 23S rRNA + 2 reduced [2Fe-2S]-[ferredoxin] + 2 S-adenosyl-L-methionine = 2-methyladenosine(2503) in 23S rRNA + 5'-deoxyadenosine + L-methionine + 2 oxidized [2Fe-2S]-[ferredoxin] + S-adenosyl-L-homocysteine. The enzyme catalyses adenosine(37) in tRNA + 2 reduced [2Fe-2S]-[ferredoxin] + 2 S-adenosyl-L-methionine = 2-methyladenosine(37) in tRNA + 5'-deoxyadenosine + L-methionine + 2 oxidized [2Fe-2S]-[ferredoxin] + S-adenosyl-L-homocysteine. Specifically methylates position 2 of adenine 2503 in 23S rRNA and position 2 of adenine 37 in tRNAs. m2A2503 modification seems to play a crucial role in the proofreading step occurring at the peptidyl transferase center and thus would serve to optimize ribosomal fidelity. This Haemophilus influenzae (strain PittEE) protein is Dual-specificity RNA methyltransferase RlmN.